We begin with the raw amino-acid sequence, 375 residues long: DNA replication and repair protein RecF (375 aa).

ATP is bound at residue 30–37 (GENAQGKT).

Belongs to the RecF family.

The protein resides in the cytoplasm. The RecF protein is involved in DNA metabolism; it is required for DNA replication and normal SOS inducibility. RecF binds preferentially to single-stranded, linear DNA. It also seems to bind ATP. The protein is DNA replication and repair protein RecF of Bacillus cereus (strain ZK / E33L).